Consider the following 569-residue polypeptide: Peptide transporter PTR_C (569 aa).

The span at 1-25 (MSQNVDEKVVHDDASVIRSVDRSES) shows a compositional bias: basic and acidic residues. The interval 1-43 (MSQNVDEKVVHDDASVIRSVDRSESDSYPDSVSPEGAEPSEEE) is disordered. Residues 54–74 (VPLACWLVAIVELAERFSYYG) form a helical membrane-spanning segment. A glycan (N-linked (GlcNAc...) asparagine) is linked at Asn-98. 3 helical membrane-spanning segments follow: residues 104–124 (ALSY…AWVA), 134–154 (ISIF…TSLP), and 159–179 (NTSL…TGGV). Asn-212 carries an N-linked (GlcNAc...) asparagine glycan. 8 helical membrane-spanning segments follow: residues 215-235 (IQNV…SVIA), 245-265 (FWAA…ALFL), 322-342 (ALYA…YGQM), 366-386 (IDSI…YPFI), 398-418 (IFWG…LQHF), 444-464 (VALQ…ASIT), 479-499 (SFIM…GIAL), and 510-530 (WTYT…WFLF).

The protein belongs to the major facilitator superfamily. Proton-dependent oligopeptide transporter (POT/PTR) (TC 2.A.17) family.

It localises to the cell membrane. The catalysed reaction is a dipeptide(out) + H(+)(out) = a dipeptide(in) + H(+)(in). It carries out the reaction an L-amino acid tripeptide(out) + H(+)(out) = an L-amino acid tripeptide(in) + H(+)(in). Functionally, peptide transporter that exploits the inwardly directed proton motive force to facilitate the cellular uptake of di/tripeptides. Shows strong uptake specificity towards the dipeptides Tyr-Phe and Leu-Gly and the tripeptide Phe-Gly-Gly, when compared to PTR_A and PTR_B. Also able to import peptide-based antifungals such as the peptide-nucleoside drug nikkomycin Z as well as the glucosamine-6-phosphate synthase inhibitor, L-norvalyl-N3-(4-methoxyfumaroyl)-L-2,3-diaminopropionoic acid (Nva-FMDP). The chain is Peptide transporter PTR_C from Candidozyma auris (Yeast).